A 385-amino-acid polypeptide reads, in one-letter code: Gibberellin 20 oxidase 5 (385 aa).

The Fe2OG dioxygenase domain occupies 224–324 (DGSGIFRCNY…RRSLVFFSCP (101 aa)). His249, Asp251, and His305 together coordinate Fe cation. Residue Arg315 is part of the active site.

The protein belongs to the iron/ascorbate-dependent oxidoreductase family. GA20OX subfamily. It depends on Fe(2+) as a cofactor. The cofactor is L-ascorbate. In terms of tissue distribution, expressed in 3-day-old seedlings and siliques. Detected in dry seeds, roots, old leaves and inflorescences.

The enzyme catalyses gibberellin A12 + 2 2-oxoglutarate + 3 O2 + H(+) = gibberellin A9 + 2 succinate + 3 CO2 + 2 H2O. The catalysed reaction is gibberellin A53 + 2 2-oxoglutarate + 3 O2 + H(+) = gibberellin A20 + 2 succinate + 3 CO2 + 2 H2O. Its pathway is plant hormone biosynthesis; gibberellin biosynthesis. Functionally, key oxidase enzyme in the biosynthesis of gibberellin that catalyzes the conversion of GA12 and GA53 to GA9 and GA20 respectively, via a three-step oxidation at C-20 of the GA skeleton. This Arabidopsis thaliana (Mouse-ear cress) protein is Gibberellin 20 oxidase 5 (GA20OX5).